We begin with the raw amino-acid sequence, 95 residues long: Osteocalcin (95 aa).

The first 23 residues, 1–23 (MRTIFLLTLLTLAALCLSDLTDA), serve as a signal peptide directing secretion. Positions 24 to 49 (KPSGPESDKAFMSKQEGNKVVNRLRR) are excised as a propeptide. Positions 46-92 (RLRRYLGASVPSPDPLEPTREQCELNPACDELSDQYGLKTAYKRIYG) constitute a Gla domain. Positions 62, 66, 69, and 75 each coordinate Ca(2+). Residues E62, E66, and E69 each carry the 4-carboxyglutamate modification. Residues C68 and C74 are joined by a disulfide bond.

The protein belongs to the osteocalcin/matrix Gla protein family. Post-translationally, gamma-carboxyglutamate residues are formed by vitamin K dependent carboxylation by GGCX. These residues are essential for the binding of calcium. Carboxylated in a Ptprv/Esp-dependent process. Decarboxylation promotes the hormone activity. As to expression, bone.

It localises to the secreted. Functionally, the carboxylated form is one of the main organic components of the bone matrix, which constitutes 1-2% of the total bone protein: it acts as a negative regulator of bone formation and is required to limit bone formation without impairing bone resorption or mineralization. The carboxylated form binds strongly to apatite and calcium. Its function is as follows. The uncarboxylated form acts as a hormone secreted by osteoblasts, which regulates different cellular processes, such as energy metabolism, male fertility and brain development. Regulates of energy metabolism by acting as a hormone favoring pancreatic beta-cell proliferation, insulin secretion and sensitivity and energy expenditure. Uncarboxylated osteocalcin hormone also promotes testosterone production in the testes: acts as a ligand for G protein-coupled receptor GPRC6A at the surface of Leydig cells, initiating a signaling response that promotes the expression of enzymes required for testosterone synthesis in a CREB-dependent manner. Also acts as a regulator of brain development: osteocalcin hormone crosses the blood-brain barrier and acts as a ligand for GPR158 on neurons, initiating a signaling response that prevents neuronal apoptosis in the hippocampus, favors the synthesis of all monoamine neurotransmitters and inhibits that of gamma-aminobutyric acid (GABA). Osteocalcin also crosses the placenta during pregnancy and maternal osteocalcin is required for fetal brain development. The polypeptide is Osteocalcin (Mus musculus (Mouse)).